Consider the following 432-residue polypeptide: Probable anion transporter 5 (432 aa).

A signal peptide spans 1–23; it reads MKLSNIPQRYVIVFLTFLSTCVC. The next 11 helical transmembrane spans lie at 50 to 70, 78 to 98, 101 to 121, 140 to 160, 164 to 184, 229 to 249, 273 to 293, 305 to 325, 331 to 351, 360 to 380, and 405 to 425; these read TILS…GWAA, VLLL…LDPN, GLLV…FPSI, ITTS…PALV, GPES…LLWI, LPVW…YVLM, VPYL…DYLI, KFLN…LPMF, VILC…GFAV, YAGI…IIGV, and VVFF…LLFS.

The protein belongs to the major facilitator superfamily. Sodium/anion cotransporter (TC 2.A.1.14) family. In terms of tissue distribution, ubiquitous.

Its subcellular location is the golgi apparatus membrane. In terms of biological role, inorganic phosphate and probable anion transporter. The polypeptide is Probable anion transporter 5 (ANTR5) (Arabidopsis thaliana (Mouse-ear cress)).